The chain runs to 740 residues: F-BAR and double SH3 domains protein 2 (740 aa).

The region spanning 8–282 (VKVTQELKNI…NSSKVVRDYN (275 aa)) is the F-BAR domain. A disordered region spans residues 303 to 323 (PCDSDTSRQLESETGTTEEHS). Residues 307 to 323 (DTSRQLESETGTTEEHS) show a composition bias toward basic and acidic residues. Residues 356 to 397 (GAAVSEQSRAELEQKIDEARENIRKAEIIKLKAEARLDLLKQ) are a coiled coil. SH3 domains lie at 469–530 (NYPL…FPTS) and 567–629 (ASVC…ELSA). The tract at residues 567–629 (ASVCFVKALY…PSVLVEELSA (63 aa)) is required and sufficient for location at clathrin-coated pits. The disordered stretch occupies residues 633–740 (GDTPWMREIQ…KIEDVEITLV (108 aa)). The span at 646–657 (SPKPHASLPPLP) shows a compositional bias: pro residues. S675 and S681 each carry phosphoserine.

Homodimer. Interacts (via SH3 domain 2) with ITSN1 (via SH3 domain 4). Recruited to clathrin-coated pits during a mid-to-late stage of assembly via interaction with ITSN1. Interacts (via SH3 domain 1) with WASL. Interacts with WAS. Interacts with CASK and MAGI1. CASK inhibits interaction with MAGI1. Phosphorylated. Phosphorylation on a Ser residue is important for recruitment to the cell membrane and for its role in promoting endocytosis. As to expression, liver, brain, heart, placenta, skeletal muscle, pancreas, lung and kidney.

It localises to the cytoplasm. Its subcellular location is the cell junction. The protein resides in the membrane. It is found in the clathrin-coated pit. The protein localises to the cell membrane. It localises to the cell projection. Its subcellular location is the stereocilium. Adapter protein that plays a role in endocytosis via clathrin-coated pits. Contributes to the internalization of cell surface receptors, such as integrin ITGB1 and transferrin receptor. Promotes endocytosis of EGFR in cancer cells, and thereby contributes to the down-regulation of EGFR signaling. Recruited to clathrin-coated pits during a mid-to-late stage of assembly, where it is required for normal progress from U-shaped intermediate stage pits to terminal, omega-shaped pits. Binds to membranes enriched in phosphatidylinositol 3,4-bisphosphate or phosphatidylinositol 3,4,5-trisphosphate. When bound to membranes, promotes actin polymerization via its interaction with WAS and/or WASL which leads to the activation of the Arp2/3 complex. Does not promote actin polymerisation in the absence of membranes. In Homo sapiens (Human), this protein is F-BAR and double SH3 domains protein 2 (FCHSD2).